Here is a 565-residue protein sequence, read N- to C-terminus: Periplasmic trehalase (565 aa).

Residues 1 to 30 (MKSPAPSRPQKMALIPACIFLCFAALSVQA) form the signal peptide. Substrate contacts are provided by residues Arg-152, 159–160 (WD), Asn-196, 205–207 (RSQ), 277–279 (RPE), and Gly-310. Active-site proton donor/acceptor residues include Asp-312 and Glu-496. Glu-511 is a substrate binding site. Residues 539 to 565 (CDNVPATRPLSESTTQPVKQKEAEPTP) form a disordered region.

This sequence belongs to the glycosyl hydrolase 37 family. As to quaternary structure, monomer.

The protein resides in the periplasm. The catalysed reaction is alpha,alpha-trehalose + H2O = alpha-D-glucose + beta-D-glucose. Functionally, provides the cells with the ability to utilize trehalose at high osmolarity by splitting it into glucose molecules that can subsequently be taken up by the phosphotransferase-mediated uptake system. In Escherichia coli O6:H1 (strain CFT073 / ATCC 700928 / UPEC), this protein is Periplasmic trehalase.